A 400-amino-acid chain; its full sequence is 2-octaprenylphenol hydroxylase (400 aa).

FAD contacts are provided by residues 49-52 (RVSA) and 297-303 (LAGQGVN).

Belongs to the UbiH/COQ6 family. As to quaternary structure, homotetramer. Component of the Ubi complex metabolon, which regroups five ubiquinone biosynthesis proteins (UbiE, UbiF, UbiG, UbiH and UbiI) and two accessory factors (UbiK and the lipid-binding protein UbiJ). Requires FAD as cofactor.

It is found in the cytoplasm. The enzyme catalyses 2-all-trans-octaprenylphenol + NADPH + O2 + H(+) = 3-(all-trans-octaprenyl)benzene-1,2-diol + NADP(+) + H2O. The catalysed reaction is a 2-(all-trans-polyprenyl)phenol + NADPH + O2 + H(+) = a 3-(all-trans-polyprenyl)benzene-1,2-diol + NADP(+) + H2O. The protein operates within cofactor biosynthesis; ubiquinone biosynthesis. In terms of biological role, FAD-dependent monooxygenase required for the aerobic hydroxylation of 2-octaprenylphenol to 2-octaprenyl-6-hydroxy-phenol, the first hydroxylation step in coenzyme Q (ubiquinone) biosynthesis. The chain is 2-octaprenylphenol hydroxylase from Escherichia coli (strain K12).